A 206-amino-acid polypeptide reads, in one-letter code: Probable GTP-binding protein EngB (206 aa).

Residues 8-195 form the EngB-type G domain; sequence RSDEVVLVGR…EDAVNSHFDA (188 aa). GTP contacts are provided by residues 16 to 23, 41 to 45, 60 to 63, 140 to 143, and 175 to 177; these read GRSNVGKS, GVTRQ, DLPG, NKMD, and ITA. Ser23 and Thr43 together coordinate Mg(2+).

This sequence belongs to the TRAFAC class TrmE-Era-EngA-EngB-Septin-like GTPase superfamily. EngB GTPase family. The cofactor is Mg(2+).

Its function is as follows. Necessary for normal cell division and for the maintenance of normal septation. This is Probable GTP-binding protein EngB from Halobacterium salinarum (strain ATCC 29341 / DSM 671 / R1).